The sequence spans 1227 residues: Anion exchange protein 3 (1227 aa).

Positions 1 to 11 (MANGVIPPPGG) are enriched in pro residues. 3 disordered regions span residues 1 to 256 (MANG…DEAE), 286 to 312 (KPSR…KKKK), and 428 to 497 (NDDK…GDGH). Residues 1–707 (MANGVIPPPG…DLRDALHSQC (707 aa)) lie on the Cytoplasmic side of the membrane. Positions 58–75 (DPEKPSRSYSERDFEFHR) are enriched in basic and acidic residues. Composition is skewed to basic residues over residues 76–97 (HTSH…KLRR) and 104–113 (RHTRRKRKKE). Acidic residues predominate over residues 134 to 152 (AEEEEEEEEEEEGESEAEP). A phosphoserine mark is found at serine 167, serine 170, serine 175, and serine 198. A compositionally biased stretch (low complexity) spans 194 to 215 (QSDQSPQRSGSSPSPRARASRI). At arginine 294 the chain carries Omega-N-methylarginine. Over residues 435–448 (FFPRNPSSSSVNSV) the composition is skewed to low complexity. The span at 480 to 497 (HDPDAKEKPLHMPGGDGH) shows a compositional bias: basic and acidic residues. The next 4 membrane-spanning stretches (helical) occupy residues 708 to 730 (VAAV…GLLG), 736 to 773 (LMGV…LLVF), 793 to 815 (VWVG…SFLV), and 825 to 846 (IFAF…YKVF). The interval 708 to 1227 (VAAVLFIYFA…DEYNELHMPV (520 aa)) is membrane (anion exchange). The N-linked (GlcNAc...) asparagine glycan is linked to asparagine 868. A helical membrane pass occupies residues 888–905 (ALLSLILMLGTFLIAFFL). At 906-920 (RKFRNSRFLGGKARR) the chain is on the cytoplasmic side. 5 helical membrane-spanning segments follow: residues 921-941 (IIGD…DYSI), 975-997 (PFPP…LIFM), 1023-1044 (LLLI…LTAA), 1078-1123 (VTGV…IQLS), and 1150-1186 (MHLF…TVPL). A lipid anchor (S-palmitoyl cysteine) is attached at cysteine 1160.

Belongs to the anion exchanger (TC 2.A.31) family. Expressed in the brain.

The protein localises to the cell membrane. It carries out the reaction hydrogencarbonate(in) + chloride(out) = hydrogencarbonate(out) + chloride(in). Inhibited by 4,4'-diisothiocyanatostilbene-2,2'-disulfonic acid (DIDS). In terms of biological role, sodium-independent anion exchanger which mediates the electroneutral exchange of chloride for bicarbonate ions across the cell membrane. May be involved in the regulation of intracellular pH, and the modulation of cardiac action potential. This chain is Anion exchange protein 3 (Slc4a3), found in Mus musculus (Mouse).